The sequence spans 262 residues: Zinc finger protein 138 (262 aa).

A C2H2-type 1 zinc finger spans residues phenylalanine 110–histidine 132. The segment at tyrosine 138–histidine 160 adopts a C2H2-type 2; degenerate zinc-finger fold. The C2H2-type 3; degenerate zinc finger occupies tyrosine 166 to arginine 188. Residues tyrosine 194–histidine 216 form a C2H2-type 4 zinc finger. Residues tyrosine 222–tyrosine 244 form a C2H2-type 5; degenerate zinc finger. The C2H2-type 6; degenerate zinc finger occupies tyrosine 250–serine 262.

This sequence belongs to the krueppel C2H2-type zinc-finger protein family.

The protein resides in the nucleus. Its function is as follows. May be involved in transcriptional regulation as a repressor. The chain is Zinc finger protein 138 (ZNF138) from Homo sapiens (Human).